The primary structure comprises 777 residues: Ribosome-releasing factor 2, mitochondrial (777 aa).

In terms of domain architecture, tr-type G spans 68 to 353; the sequence is AKIRNIGIMA…AVTMYLPSPE (286 aa). Residues 77–84, 141–145, and 195–198 contribute to the GTP site; these read AHIDAGKT, DTPGH, and NKMD.

It belongs to the TRAFAC class translation factor GTPase superfamily. Classic translation factor GTPase family. EF-G/EF-2 subfamily.

The protein localises to the mitochondrion. It catalyses the reaction GTP + H2O = GDP + phosphate + H(+). Mitochondrial GTPase that mediates the disassembly of ribosomes from messenger RNA at the termination of mitochondrial protein biosynthesis. Acts in collaboration with MRRF. GTP hydrolysis follows the ribosome disassembly and probably occurs on the ribosome large subunit. Not involved in the GTP-dependent ribosomal translocation step during translation elongation. The chain is Ribosome-releasing factor 2, mitochondrial from Pongo abelii (Sumatran orangutan).